The sequence spans 412 residues: Putative competence-damage inducible protein (412 aa).

The protein belongs to the CinA family.

This Bacillus cereus (strain B4264) protein is Putative competence-damage inducible protein.